We begin with the raw amino-acid sequence, 225 residues long: Urease accessory protein UreG (225 aa).

The tract at residues 1–21 is disordered; it reads MHLDHHHESAAAVSADARRPD. 33–40 provides a ligand contact to GTP; sequence GPVGSGKT.

The protein belongs to the SIMIBI class G3E GTPase family. UreG subfamily. As to quaternary structure, homodimer. UreD, UreF and UreG form a complex that acts as a GTP-hydrolysis-dependent molecular chaperone, activating the urease apoprotein by helping to assemble the nickel containing metallocenter of UreC. The UreE protein probably delivers the nickel.

The protein localises to the cytoplasm. Facilitates the functional incorporation of the urease nickel metallocenter. This process requires GTP hydrolysis, probably effectuated by UreG. This Streptomyces coelicolor (strain ATCC BAA-471 / A3(2) / M145) protein is Urease accessory protein UreG.